The following is a 221-amino-acid chain: N-(5'-phosphoribosyl)anthranilate isomerase (221 aa).

This sequence belongs to the TrpF family.

It catalyses the reaction N-(5-phospho-beta-D-ribosyl)anthranilate = 1-(2-carboxyphenylamino)-1-deoxy-D-ribulose 5-phosphate. It functions in the pathway amino-acid biosynthesis; L-tryptophan biosynthesis; L-tryptophan from chorismate: step 3/5. The protein is N-(5'-phosphoribosyl)anthranilate isomerase of Chlorobaculum parvum (strain DSM 263 / NCIMB 8327) (Chlorobium vibrioforme subsp. thiosulfatophilum).